The chain runs to 153 residues: 3-hydroxyacyl-[acyl-carrier-protein] dehydratase FabZ (153 aa).

His54 is a catalytic residue.

This sequence belongs to the thioester dehydratase family. FabZ subfamily.

Its subcellular location is the cytoplasm. It catalyses the reaction a (3R)-hydroxyacyl-[ACP] = a (2E)-enoyl-[ACP] + H2O. In terms of biological role, involved in unsaturated fatty acids biosynthesis. Catalyzes the dehydration of short chain beta-hydroxyacyl-ACPs and long chain saturated and unsaturated beta-hydroxyacyl-ACPs. This Shewanella loihica (strain ATCC BAA-1088 / PV-4) protein is 3-hydroxyacyl-[acyl-carrier-protein] dehydratase FabZ.